The primary structure comprises 155 residues: Conopressin/neurophysin (155 aa).

The first 26 residues, 1–26 (MMSSLCGMPLTYLLTAAVLSLSLTDA), serve as a signal peptide directing secretion. Cys-27 and Cys-32 are disulfide-bonded. Gly-35 is modified (glycine amide). Disulfide bonds link Cys-50–Cys-94, Cys-53–Cys-67, Cys-61–Cys-84, Cys-68–Cys-74, Cys-101–Cys-115, Cys-109–Cys-127, and Cys-116–Cys-121. The N-linked (GlcNAc...) asparagine glycan is linked to Asn-88.

Belongs to the vasopressin/oxytocin family. Seven disulfide bonds are present in neurophysin.

The protein localises to the secreted. The protein is Conopressin/neurophysin of Lymnaea stagnalis (Great pond snail).